The primary structure comprises 256 residues: Non-homologous end joining protein Ku 2 (256 aa).

Residues 13–184 (FADTDVAVKL…SLELQESPVS (172 aa)) form the Ku domain.

Belongs to the prokaryotic Ku family. Homodimer. Interacts with LigD.

Its function is as follows. With LigD forms a non-homologous end joining (NHEJ) DNA repair enzyme, which repairs dsDNA breaks with reduced fidelity. Binds linear dsDNA with 5'- and 3'- overhangs but not closed circular dsDNA nor ssDNA. Recruits and stimulates the ligase activity of LigD. This Geotalea uraniireducens (strain Rf4) (Geobacter uraniireducens) protein is Non-homologous end joining protein Ku 2.